A 654-amino-acid polypeptide reads, in one-letter code: Potassium voltage-gated channel subfamily A member 4 (654 aa).

At 1–305 (MEVAMVSAES…LLFEYPESSS (305 aa)) the chain is on the cytoplasmic side. A compositionally biased stretch (low complexity) spans 39-52 (AAAAAVAAATAAVE). Positions 39-146 (AAAAAVAAAT…EGRFYYSEDD (108 aa)) are disordered. Over residues 81 to 99 (GSRRRRRQRPEKKKAHHRQ) the composition is skewed to basic residues. Ser122 is modified (phosphoserine). The segment covering 122-137 (SEEEEEEEDEEEEEEE) has biased composition (acidic residues). Residues 306 to 327 (PARGIAIVSVLVILISIVIFCL) traverse the membrane as a helical segment. The Extracellular segment spans residues 328–371 (ETLPEFRDDRDLIMALSAGGHSGLLNDTSAPHLENSGHTIFNDP). Asn353 is a glycosylation site (N-linked (GlcNAc...) asparagine). Residues 372 to 393 (FFIVETVCIVWFSFEFVVRCFA) form a helical membrane-spanning segment. Topologically, residues 394-404 (CPSQALFFKNI) are cytoplasmic. Residues 405–425 (MNIIDIVSILPYFITLGTDLA) form a helical membrane-spanning segment. At 426–440 (QQQGGGNGQQQQAMS) the chain is on the extracellular side. Residues 441 to 461 (FAILRIIRLVRVFRIFKLSRH) form a helical; Voltage-sensor membrane-spanning segment. At 462-476 (SKGLQILGHTLRASM) the chain is on the cytoplasmic side. The S4-S5 linker stretch occupies residues 463 to 476 (KGLQILGHTLRASM). A helical transmembrane segment spans residues 477–498 (RELGLLIFFLFIGVILFSSAVY). The Extracellular segment spans residues 499 to 512 (FAEADEPTTHFQSI). The helical intramembrane region spans 513 to 524 (PDAFWWAVVTMT). A Selectivity filter motif is present at residues 525–530 (TVGYGD). Residues 525–532 (TVGYGDMK) lie within the membrane without spanning it. Residues 533–539 (PITVGGK) are Extracellular-facing. Residues 540-568 (IVGSLCAIAGVLTIALPVPVIVSNFNYFY) traverse the membrane as a helical segment. Topologically, residues 569-654 (HRETENEEQT…SNAKAVETDV (86 aa)) are cytoplasmic. Residue Ser600 is modified to Phosphoserine; by PKA. The span at 630–641 (CQGKGDDSETDK) shows a compositional bias: basic and acidic residues. Residues 630 to 654 (CQGKGDDSETDKNNCSNAKAVETDV) are disordered. The PDZ-binding motif lies at 652–654 (TDV).

It belongs to the potassium channel family. A (Shaker) (TC 1.A.1.2) subfamily. Kv1.4/KCNA4 sub-subfamily. As to quaternary structure, homotetramer and heterotetramer of potassium channel proteins. Interacts with KCNAB1 and KCNAB2. Interacts with DLG1, DLG2 and DLG4 via their PDZ domains. Interacts with SIGMAR1. Detected in a complex with KCNA1. Interacts with KCNA2. Part of a complex containing KCNA1, KCNAB1 and LGI1. Interacts (via cytoplasmic N-terminal domain) with KCNRG. As to expression, detectable in brain, atrium, left and right ventricle, and kidney, but not in skeletal muscle, endothelial cells, aorta, and liver.

The protein resides in the cell membrane. Its subcellular location is the cell projection. It localises to the axon. It carries out the reaction K(+)(in) = K(+)(out). Its function is as follows. Voltage-gated potassium channel that mediates transmembrane potassium transport in excitable membranes. Forms tetrameric potassium-selective channels through which potassium ions pass in accordance with their electrochemical gradient. The channel alternates between opened and closed conformations in response to the voltage difference across the membrane. Can form functional homotetrameric channels and heterotetrameric channels that contain variable proportions of KCNA1, KCNA2, KCNA4, KCNA5, and possibly other family members as well; channel properties depend on the type of alpha subunits that are part of the channel. Channel properties are modulated by cytoplasmic beta subunits that regulate the subcellular location of the alpha subunits and promote rapid inactivation. In vivo, membranes probably contain a mixture of heteromeric potassium channel complexes, making it difficult to assign currents observed in intact tissues to any particular potassium channel family member. Homotetrameric KCNA4 forms a potassium channel that opens in response to membrane depolarization, followed by rapid spontaneous channel closure. Likewise, a heterotetrameric channel formed by KCNA1 and KCNA4 shows rapid inactivation. This Mustela putorius furo (European domestic ferret) protein is Potassium voltage-gated channel subfamily A member 4 (KCNA4).